A 288-amino-acid chain; its full sequence is MAEKKQWHETLHDQFGQYFAVDNVLYHEKTDHQDLIIFENAAFGRVMALDGVVQTTERDEFIYHEMMTHVPLLAHGHAKDVLIIGGGDGAMLREVTRHKNVESITMVEIDAGVVSFCRQYLPNHNAGSYDDPRFKLVIDDGVNFVNQTSQTFDVIISDCTDPIGPGESLFTSAFYEGCKRCLNPGGIFVAQNGVCFLQQEEAIDSHRKLSNYFSDVGFYQAAIPTYYGGIMTFAWATDNDALRHLSSEIIQARFLASGLKCRYYNPAVHTAAFALPQYLQDALASQPS.

The 230-residue stretch at 9–238 folds into the PABS domain; the sequence is ETLHDQFGQY…GIMTFAWATD (230 aa). An S-methyl-5'-thioadenosine-binding site is contributed by Gln-33. Residues His-64 and Asp-88 each contribute to the spermidine site. Residues Glu-108 and 140 to 141 contribute to the S-methyl-5'-thioadenosine site; that span reads DG. The active-site Proton acceptor is Asp-158. Residue 158-161 coordinates spermidine; it reads DCTD. Pro-165 is a binding site for S-methyl-5'-thioadenosine.

It belongs to the spermidine/spermine synthase family. In terms of assembly, homodimer or homotetramer.

It is found in the cytoplasm. It carries out the reaction S-adenosyl 3-(methylsulfanyl)propylamine + putrescine = S-methyl-5'-thioadenosine + spermidine + H(+). The protein operates within amine and polyamine biosynthesis; spermidine biosynthesis; spermidine from putrescine: step 1/1. In terms of biological role, catalyzes the irreversible transfer of a propylamine group from the amino donor S-adenosylmethioninamine (decarboxy-AdoMet) to putrescine (1,4-diaminobutane) to yield spermidine. The protein is Polyamine aminopropyltransferase of Escherichia fergusonii (strain ATCC 35469 / DSM 13698 / CCUG 18766 / IAM 14443 / JCM 21226 / LMG 7866 / NBRC 102419 / NCTC 12128 / CDC 0568-73).